Here is a 45-residue protein sequence, read N- to C-terminus: Mu-conotoxin-like Cal 12.1.2g (45 aa).

4 cysteine pairs are disulfide-bonded: C3/C16, C11/C28, C18/C33, and C27/C39. P23 carries the 4-hydroxyproline modification. 6'-bromotryptophan occurs at positions 37 and 38. P40 is subject to 4-hydroxyproline.

Expressed by the venom duct.

The protein resides in the secreted. Functionally, mu-conotoxins block voltage-gated sodium channels. This toxin reversibly blocks voltage-gated sodium channel in cephalopods, with no alteration in the voltage dependence of sodium conductance or on the kinetics of inactivation. The protein is Mu-conotoxin-like Cal 12.1.2g of Californiconus californicus (California cone).